A 330-amino-acid chain; its full sequence is Succinylglutamate desuccinylase (330 aa).

Zn(2+) contacts are provided by histidine 53, glutamate 56, and histidine 147. The active site involves glutamate 210.

It belongs to the AspA/AstE family. Succinylglutamate desuccinylase subfamily. Zn(2+) is required as a cofactor.

The catalysed reaction is N-succinyl-L-glutamate + H2O = L-glutamate + succinate. It functions in the pathway amino-acid degradation; L-arginine degradation via AST pathway; L-glutamate and succinate from L-arginine: step 5/5. Its function is as follows. Transforms N(2)-succinylglutamate into succinate and glutamate. The chain is Succinylglutamate desuccinylase from Yersinia pseudotuberculosis serotype O:1b (strain IP 31758).